A 377-amino-acid polypeptide reads, in one-letter code: MIVTALDPTHPLAAGLTHASRLVRSYQGERQEVTPVWFMRQAGRSLPEYRDLRVGTRMLDVCLDPAMASEITLQPVRRHGVDAGIFFSDIVVPLKLAGVEVEIQPGKGPVFERAVRTSADVDRLSAVDPAALAADTFAAVQEAVRLTTAELNETPLIGFAGAPFTLAAYLVEGGPSKDHLRARTLMHAAPGAWARLMDWTADLSGAFLRAQVLAGASAAQLFDSWAGSLSLRDYAEHAAPASARAFSHVRDLTYTVPSADPDGEAVVRAVPIVHFGVGTGELLPAMHEAGADAIGVDHRTLLDEASRRLGHIVPLQGNADPAMLAAPWEVLSGHALDVLDRGRAAPAHVFNLGHGVPPETDPAVLTRVVELVHGWRA.

Substrate contacts are provided by residues 40–44 (RQAGR), Asp-89, Tyr-169, Ser-224, and His-354.

This sequence belongs to the uroporphyrinogen decarboxylase family. In terms of assembly, homodimer.

The protein resides in the cytoplasm. It carries out the reaction uroporphyrinogen III + 4 H(+) = coproporphyrinogen III + 4 CO2. Its pathway is porphyrin-containing compound metabolism; protoporphyrin-IX biosynthesis; coproporphyrinogen-III from 5-aminolevulinate: step 4/4. Catalyzes the decarboxylation of four acetate groups of uroporphyrinogen-III to yield coproporphyrinogen-III. In Leifsonia xyli subsp. xyli (strain CTCB07), this protein is Uroporphyrinogen decarboxylase.